The sequence spans 193 residues: Inner membrane-spanning protein YciB (193 aa).

Transmembrane regions (helical) follow at residues 5 to 25, 36 to 56, 67 to 87, 93 to 113, 138 to 158, and 164 to 184; these read TLDA…FYIY, IIAA…LMFV, WLVV…QDDF, APII…FLGG, VWVG…FVWV, and FTAF…FWFL.

The protein belongs to the YciB family.

The protein resides in the cell inner membrane. In terms of biological role, plays a role in cell envelope biogenesis, maintenance of cell envelope integrity and membrane homeostasis. The sequence is that of Inner membrane-spanning protein YciB from Vitreoscilla sp. (strain C1).